A 155-amino-acid chain; its full sequence is WPP domain-containing protein 1 (155 aa).

Disordered regions lie at residues 1-41 and 124-155; these read MAET…VTIS and SVKAKSNVASPPPKDGDGIESAVDSKIDSSEA. Low complexity predominate over residues 7-39; the sequence is ESITTSSPPPISETENSTTLPTTETEKNPNPVT. The interval 28-131 is WPP; sequence TTETEKNPNP…LESVKAKSNV (104 aa). The span at 146–155 shows a compositional bias: basic and acidic residues; the sequence is VDSKIDSSEA.

In terms of assembly, binds to FPP proteins. Interacts with WAP, WIP1, WIP2 and WIP3 through its WPP domain. Interacts with HSP70-1, HSP70-3 and WIT1. Component of a ternary complex composed of WPP1, HSP70-1 and WIT1. Expressed in roots, stems and leaves.

It localises to the nucleus envelope. It is found in the cytoplasm. The protein localises to the nucleus. Its subcellular location is the golgi apparatus. The protein resides in the nucleus matrix. Its function is as follows. Regulates the mitotic activity in roots. Plays a role with HSP70-1 in facilitating WIT1 nuclear envelope targeting. The sequence is that of WPP domain-containing protein 1 (WPP1) from Arabidopsis thaliana (Mouse-ear cress).